A 158-amino-acid polypeptide reads, in one-letter code: MYQIMRKQIEIFTDGSCLGNPGAGGIGVVLRYKQHEKTLSQGYFKTTNNRMELRAVIEALNLLKEPCAVTLHSDSQYMKNGITQWIFNWKKKNWKASNGKPVKNQDLWMALDNAVQAHTIDWRWVKGHSGHRENELCDQLAKQGAENPTLEDIGYQPD.

The RNase H type-1 domain maps to 5 to 146 (MRKQIEIFTD…CDQLAKQGAE (142 aa)). Residues D14, E52, D74, and D138 each contribute to the Mg(2+) site.

The protein belongs to the RNase H family. In terms of assembly, monomer. The cofactor is Mg(2+).

Its subcellular location is the cytoplasm. The enzyme catalyses Endonucleolytic cleavage to 5'-phosphomonoester.. In terms of biological role, endonuclease that specifically degrades the RNA of RNA-DNA hybrids. This Mannheimia succiniciproducens (strain KCTC 0769BP / MBEL55E) protein is Ribonuclease H.